A 522-amino-acid chain; its full sequence is Target of rapamycin complex 2 subunit MAPKAP1 (522 aa).

Residue alanine 2 is modified to N-acetylalanine. The tract at residues alanine 2–histidine 184 is interaction with MAP3K2. Residues alanine 2–lysine 267 are interaction with NBN. At threonine 86 the chain carries Phosphothreonine. A phosphoserine mark is found at serine 128, serine 186, serine 315, and serine 356. A CRIM domain is found at glutamine 139–lysine 267. The segment at leucine 279–arginine 353 is SIN1-type RBD. Residues histidine 382–glutamate 487 enclose the SIN1-type PH domain. A 1,2-diacyl-sn-glycero-3-phospho-(1D-myo-inositol-3,4,5-trisphosphate) is bound at residue arginine 393. At threonine 398 the chain carries Phosphothreonine. Positions 428 and 464 each coordinate a 1,2-diacyl-sn-glycero-3-phospho-(1D-myo-inositol-3,4,5-trisphosphate). The interaction with ATF2 stretch occupies residues phenylalanine 468–glutamine 522. Serine 510 carries the post-translational modification Phosphoserine.

This sequence belongs to the SIN1 family. As to quaternary structure, component of the mechanistic target of rapamycin complex 2 (mTORC2), consisting in two heterotretramers composed of MTOR, MLST8, RICTOR and MAPKAP1/SIN1. The mTORC2 core complex associates with PRR5/PROTOR1 and/or PRR5L/PROTOR2. Contrary to mTORC1, mTORC2 does not bind to and is not sensitive to FKBP12-rapamycin. Interacts with MAP3K2. Interacts with ATF2. Interacts with MAPK8. Interacts with GTP-bound HRAS and KRAS; inhibiting their activity. Interacts with IFNAR2. In terms of processing, phosphorylation at Ser-128 by PKC promotes relocalization to the perinuclear region, where the mTORC2 complex specifically mediates phosphorylation of SGK1. Phosphorylated at Thr-86 by AKT1 or RPS6KB1 in the presence of growth factors; the effect of this phosphorylation is however unclear. According to two studies, phosphorylation at Thr-86 by AKT1 is part of a positive feedback loop that increases mTORC2 activation. According to another study, phosphorylation at Thr-86 and Thr-398 by RPS6KB1 promotes dissociation from the mTORC2 complex, leading to inhibit mTORC2 signaling.

The protein localises to the cell membrane. It is found in the endoplasmic reticulum membrane. The protein resides in the early endosome membrane. Its subcellular location is the late endosome membrane. It localises to the lysosome membrane. The protein localises to the golgi apparatus membrane. It is found in the mitochondrion outer membrane. The protein resides in the cytoplasm. Its subcellular location is the perinuclear region. It localises to the nucleus. With respect to regulation, phosphatidylinositol 3,4,5-trisphosphate (PI(3,4,5)P3) promotes MTOR activation by relieving MAPKAP1/SIN1-mediated inhibition of MTOR that takes place in absence of PI(3,4,5)P3. Its function is as follows. Component of the mechanistic target of rapamycin complex 2 (mTORC2), which transduces signals from growth factors to pathways involved in proliferation, cytoskeletal organization, lipogenesis and anabolic output. In response to growth factors, mTORC2 phosphorylates and activates AGC protein kinase family members, including AKT (AKT1, AKT2 and AKT3), PKC (PRKCA, PRKCB and PRKCE) and SGK1. In contrast to mTORC1, mTORC2 is nutrient-insensitive. Within the mTORC2 complex, MAPKAP1/SIN1 acts as a substrate adapter which recognizes and binds AGC protein kinase family members for phosphorylation by MTOR. mTORC2 plays a critical role in AKT1 activation by mediating phosphorylation of different sites depending on the context, such as 'Thr-450', 'Ser-473', 'Ser-477' or 'Thr-479', facilitating the phosphorylation of the activation loop of AKT1 on 'Thr-308' by PDPK1/PDK1 which is a prerequisite for full activation. mTORC2 catalyzes the phosphorylation of SGK1 at 'Ser-422' and of PRKCA on 'Ser-657'. The mTORC2 complex also phosphorylates various proteins involved in insulin signaling, such as FBXW8 and IGF2BP1. mTORC2 acts upstream of Rho GTPases to regulate the actin cytoskeleton, probably by activating one or more Rho-type guanine nucleotide exchange factors. mTORC2 promotes the serum-induced formation of stress-fibers or F-actin. MAPKAP1 inhibits MAP3K2 by preventing its dimerization and autophosphorylation. Inhibits HRAS and KRAS independently of mTORC2 complex. Enhances osmotic stress-induced phosphorylation of ATF2 and ATF2-mediated transcription. Involved in ciliogenesis, regulates cilia length through its interaction with CCDC28B independently of mTORC2 complex. The chain is Target of rapamycin complex 2 subunit MAPKAP1 (MAPKAP1) from Pongo abelii (Sumatran orangutan).